We begin with the raw amino-acid sequence, 142 residues long: ATP synthase epsilon chain (142 aa).

Belongs to the ATPase epsilon chain family. As to quaternary structure, F-type ATPases have 2 components, CF(1) - the catalytic core - and CF(0) - the membrane proton channel. CF(1) has five subunits: alpha(3), beta(3), gamma(1), delta(1), epsilon(1). CF(0) has three main subunits: a, b and c.

It is found in the cell inner membrane. Produces ATP from ADP in the presence of a proton gradient across the membrane. This Actinobacillus succinogenes (strain ATCC 55618 / DSM 22257 / CCUG 43843 / 130Z) protein is ATP synthase epsilon chain.